The chain runs to 396 residues: Elongation factor Tu (396 aa).

In terms of domain architecture, tr-type G spans 10–206 (KPHVNIGTIG…AVDSYIPDPE (197 aa)). Residues 19-26 (GHVDHGKT) are G1. 19 to 26 (GHVDHGKT) contributes to the GTP binding site. Residue Thr26 coordinates Mg(2+). The interval 60-64 (GITIA) is G2. The tract at residues 81 to 84 (DCPG) is G3. Residues 81-85 (DCPGH) and 136-139 (NKAD) contribute to the GTP site. The G4 stretch occupies residues 136–139 (NKAD). The tract at residues 174–176 (SAL) is G5.

The protein belongs to the TRAFAC class translation factor GTPase superfamily. Classic translation factor GTPase family. EF-Tu/EF-1A subfamily. As to quaternary structure, monomer.

Its subcellular location is the cytoplasm. The catalysed reaction is GTP + H2O = GDP + phosphate + H(+). GTP hydrolase that promotes the GTP-dependent binding of aminoacyl-tRNA to the A-site of ribosomes during protein biosynthesis. The chain is Elongation factor Tu from Pelobacter propionicus (strain DSM 2379 / NBRC 103807 / OttBd1).